The primary structure comprises 387 residues: MQFIPSPAMVFDGSLNLDPLVSGKPPEETTVVVAMSGGVDSSVVAALLHERGYKVIGATMQLHSSSPASGAKSCCGSVDIYDAKRVASTLGFPHYVLDYEEVFRREVIDDFINSYKRGETPIPCVKCNQTVKFRDMLKAARAIGGDVVATGHYVRRVEIAGEQQILRGKDPQKDQSYFLFSVTSEQLKFLRFPLGDLAKSNVRLLAQQLNLEVADKPDSQDICFVPENSYREVLRNLDPASVKKGKIVHVDGRLLGEHDGISNFTVGQRRGLNISAPYPLYVVRLDAAQNTVVVGPQSALMKRALFVKNLNWLPDYNIPKRGLAVDARLRSSGATVRATITSDGDGYGTVVLEEDCVVSPGQACVLYDKERLLGGGWIYNKLCHEGA.

ATP-binding positions include 34 to 41 (AMSGGVDS) and M60. Residue C127 is the Nucleophile of the active site. The cysteines at positions 127 and 223 are disulfide-linked. G151 is an ATP binding site. The segment at 173–175 (KDQ) is interaction with tRNA. The active-site Cysteine persulfide intermediate is C223.

It belongs to the MnmA/TRMU family.

It localises to the cytoplasm. It carries out the reaction S-sulfanyl-L-cysteinyl-[protein] + uridine(34) in tRNA + AH2 + ATP = 2-thiouridine(34) in tRNA + L-cysteinyl-[protein] + A + AMP + diphosphate + H(+). Its function is as follows. Catalyzes the 2-thiolation of uridine at the wobble position (U34) of tRNA, leading to the formation of s(2)U34. The chain is tRNA-specific 2-thiouridylase MnmA from Anaplasma marginale (strain St. Maries).